Reading from the N-terminus, the 302-residue chain is Bifunctional protein FolD (302 aa).

NADP(+) contacts are provided by residues 165–167 (GRS), Ser-190, and Ile-231.

This sequence belongs to the tetrahydrofolate dehydrogenase/cyclohydrolase family. In terms of assembly, homodimer.

The enzyme catalyses (6R)-5,10-methylene-5,6,7,8-tetrahydrofolate + NADP(+) = (6R)-5,10-methenyltetrahydrofolate + NADPH. It carries out the reaction (6R)-5,10-methenyltetrahydrofolate + H2O = (6R)-10-formyltetrahydrofolate + H(+). It participates in one-carbon metabolism; tetrahydrofolate interconversion. In terms of biological role, catalyzes the oxidation of 5,10-methylenetetrahydrofolate to 5,10-methenyltetrahydrofolate and then the hydrolysis of 5,10-methenyltetrahydrofolate to 10-formyltetrahydrofolate. In Prochlorococcus marinus (strain MIT 9303), this protein is Bifunctional protein FolD.